Reading from the N-terminus, the 269-residue chain is AA9 family lytic polysaccharide monooxygenase I (269 aa).

The N-terminal stretch at 1–17 (MFSKKITALALVSAVKA) is a signal peptide. Residues His-18 and His-103 each contribute to the Cu(2+) site. A disulfide bond links Cys-73 and Cys-196. N-linked (GlcNAc...) asparagine glycosylation occurs at Asn-156. 2 residues coordinate O2: His-182 and Gln-191. A Cu(2+)-binding site is contributed by Tyr-193.

This sequence belongs to the polysaccharide monooxygenase AA9 family. Cu(2+) serves as cofactor.

It localises to the secreted. It catalyses the reaction [(1-&gt;4)-beta-D-glucosyl]n+m + reduced acceptor + O2 = 4-dehydro-beta-D-glucosyl-[(1-&gt;4)-beta-D-glucosyl]n-1 + [(1-&gt;4)-beta-D-glucosyl]m + acceptor + H2O.. In terms of biological role, lytic polysaccharide monooxygenase (LPMO) that depolymerizes crystalline and amorphous polysaccharides via the oxidation of scissile alpha- or beta-(1-4)-glycosidic bonds, yielding C1 and C4 oxidation products. Catalysis by LPMOs requires the reduction of the active-site copper from Cu(II) to Cu(I) by a reducing agent and H(2)O(2) or O(2) as a cosubstrate. In Botryotinia fuckeliana (strain B05.10) (Noble rot fungus), this protein is AA9 family lytic polysaccharide monooxygenase I.